The sequence spans 93 residues: Small ribosomal subunit protein uS19 (93 aa).

It belongs to the universal ribosomal protein uS19 family.

In terms of biological role, protein S19 forms a complex with S13 that binds strongly to the 16S ribosomal RNA. The chain is Small ribosomal subunit protein uS19 from Leptospira interrogans serogroup Icterohaemorrhagiae serovar copenhageni (strain Fiocruz L1-130).